Here is a 586-residue protein sequence, read N- to C-terminus: DNA-directed RNA polymerase subunit beta' (586 aa).

Residues Cys-64, Cys-66, Cys-85, and Cys-88 each coordinate Zn(2+). Mg(2+) is bound by residues Asp-448, Asp-450, and Asp-452.

It belongs to the RNA polymerase beta' chain family. RpoC1 subfamily. In plastids the minimal PEP RNA polymerase catalytic core is composed of four subunits: alpha, beta, beta', and beta''. When a (nuclear-encoded) sigma factor is associated with the core the holoenzyme is formed, which can initiate transcription. The cofactor is Mg(2+). Zn(2+) serves as cofactor.

It localises to the plastid. It is found in the chloroplast. The enzyme catalyses RNA(n) + a ribonucleoside 5'-triphosphate = RNA(n+1) + diphosphate. In terms of biological role, DNA-dependent RNA polymerase catalyzes the transcription of DNA into RNA using the four ribonucleoside triphosphates as substrates. The polypeptide is DNA-directed RNA polymerase subunit beta' (Euglena gracilis).